We begin with the raw amino-acid sequence, 324 residues long: MTDSAPHSAVAAGLATVTPAGTVLDTWYPEPRLGVPAGARPGTTRLGALEISGELGPDYGGLVRRDESRGVEVIAVRTVIPDLAAAPVDTHDVWLRLHLLSHRLVSPRSISMDGVFGLLTNVAWTSAGPVEAATFNVHRLRAALGHVTVFGVDKFPRMVDYVIPSGVRVADGDRVRLGAHLAEGTTVMHEGFVNYNAGTLGPSMVEGRISAGVVVGPNSDIGGGASIMGTLSGGGKQVVSIGSGCLLGANAGIGISLGDNCVVEAGCYVTAGSRVTLPDGSVVKAAELSGRDGLLFRRNSVSGALEALPRTGTWGELNAQLHAN.

Mg(2+) contacts are provided by D173 and E190. E206 acts as the Acyl-anhydride intermediate in catalysis. Succinyl-CoA contacts are provided by residues R208, G223, S226, A249, 264 to 265 (EA), G272, K284, and 297 to 300 (RRNS).

It belongs to the type 2 tetrahydrodipicolinate N-succinyltransferase family. As to quaternary structure, homotrimer.

Its subcellular location is the cytoplasm. It carries out the reaction (S)-2,3,4,5-tetrahydrodipicolinate + succinyl-CoA + H2O = (S)-2-succinylamino-6-oxoheptanedioate + CoA. Its pathway is amino-acid biosynthesis; L-lysine biosynthesis via DAP pathway; LL-2,6-diaminopimelate from (S)-tetrahydrodipicolinate (succinylase route): step 1/3. Catalyzes the conversion of the cyclic tetrahydrodipicolinate (THDP) into the acyclic N-succinyl-L-2-amino-6-oxopimelate using succinyl-CoA. The chain is 2,3,4,5-tetrahydropyridine-2,6-dicarboxylate N-succinyltransferase from Geodermatophilus obscurus (strain ATCC 25078 / DSM 43160 / JCM 3152 / CCUG 61914 / KCC A-0152 / KCTC 9177 / NBRC 13315 / NRRL B-3577 / G-20).